Here is a 361-residue protein sequence, read N- to C-terminus: Phospho-N-acetylmuramoyl-pentapeptide-transferase (361 aa).

Transmembrane regions (helical) follow at residues 21–41 (YLTVRAILALFTALLLSLWIG), 74–94 (MGGIMILFAIGVSTLLWANLA), 97–117 (YVWFCLFVLFGYGAVGFVDDY), 132–152 (WKYFWLSVIALISAFGMYAIG), 168–188 (VMPQLGLFYIVLAYFVIVGTG), 199–219 (GLAIMPTVFVAAAFALIAWAT), 239–259 (LVIFCTAIVGAGLGFLWFNTY), 264–284 (FMGDVGSLALGGVLGTIAVLV), 288–308 (FLLVIMGGVFVVETLSVILQV), and 339–359 (VIIRFWIISLMLVLLGLITLK).

This sequence belongs to the glycosyltransferase 4 family. MraY subfamily. It depends on Mg(2+) as a cofactor.

Its subcellular location is the cell inner membrane. It carries out the reaction UDP-N-acetyl-alpha-D-muramoyl-L-alanyl-gamma-D-glutamyl-meso-2,6-diaminopimeloyl-D-alanyl-D-alanine + di-trans,octa-cis-undecaprenyl phosphate = di-trans,octa-cis-undecaprenyl diphospho-N-acetyl-alpha-D-muramoyl-L-alanyl-D-glutamyl-meso-2,6-diaminopimeloyl-D-alanyl-D-alanine + UMP. It participates in cell wall biogenesis; peptidoglycan biosynthesis. Catalyzes the initial step of the lipid cycle reactions in the biosynthesis of the cell wall peptidoglycan: transfers peptidoglycan precursor phospho-MurNAc-pentapeptide from UDP-MurNAc-pentapeptide onto the lipid carrier undecaprenyl phosphate, yielding undecaprenyl-pyrophosphoryl-MurNAc-pentapeptide, known as lipid I. This chain is Phospho-N-acetylmuramoyl-pentapeptide-transferase, found in Histophilus somni (strain 129Pt) (Haemophilus somnus).